Consider the following 140-residue polypeptide: Nucleoside diphosphate kinase (140 aa).

6 residues coordinate ATP: Lys-11, Phe-59, Arg-87, Thr-93, Arg-104, and Asn-114. The active-site Pros-phosphohistidine intermediate is the His-117.

Belongs to the NDK family. As to quaternary structure, homotetramer. Requires Mg(2+) as cofactor.

Its subcellular location is the cytoplasm. It catalyses the reaction a 2'-deoxyribonucleoside 5'-diphosphate + ATP = a 2'-deoxyribonucleoside 5'-triphosphate + ADP. The enzyme catalyses a ribonucleoside 5'-diphosphate + ATP = a ribonucleoside 5'-triphosphate + ADP. Its function is as follows. Major role in the synthesis of nucleoside triphosphates other than ATP. The ATP gamma phosphate is transferred to the NDP beta phosphate via a ping-pong mechanism, using a phosphorylated active-site intermediate. This Rickettsia akari (strain Hartford) protein is Nucleoside diphosphate kinase.